A 637-amino-acid chain; its full sequence is Anthranilate synthase, phenazine specific (637 aa).

Residues 1–434 (MSQTAAHLME…QREQIQADFS (434 aa)) are anthranilate synthase component I. The Glutamine amidotransferase type-1 domain occupies 437–628 (QVLIVDAEDT…LRHALIHTPV (192 aa)). Catalysis depends on for GATase activity residues C517, H602, and E604.

The enzyme catalyses chorismate + L-glutamine = anthranilate + pyruvate + L-glutamate + H(+). Its pathway is antibiotic biosynthesis; phenazine biosynthesis. In terms of biological role, involved in the biosynthesis of the antibiotic, phenazine, a nitrogen-containing heterocyclic molecule having important roles in virulence, competition and biological control. The sequence is that of Anthranilate synthase, phenazine specific (phzB) from Pseudomonas chlororaphis (Pseudomonas aureofaciens).